Reading from the N-terminus, the 182-residue chain is Probable tyrosine phosphatase protein H4 (182 aa).

In terms of domain architecture, Tyrosine-protein phosphatase spans 1 to 182; that stretch reads MEINKFICSQ…TVLKIQKSKI (182 aa). The active-site Phosphocysteine intermediate is the cysteine 142.

It belongs to the protein-tyrosine phosphatase family.

It catalyses the reaction O-phospho-L-tyrosyl-[protein] + H2O = L-tyrosyl-[protein] + phosphate. This is Probable tyrosine phosphatase protein H4 (H5) from Microplitis demolitor (Parasitoid wasp).